A 360-amino-acid chain; its full sequence is UDP-N-acetylglucosamine--N-acetylmuramyl-(pentapeptide) pyrophosphoryl-undecaprenol N-acetylglucosamine transferase (360 aa).

UDP-N-acetyl-alpha-D-glucosamine contacts are provided by Ser198 and Gln289.

The protein belongs to the glycosyltransferase 28 family. MurG subfamily.

It localises to the cell membrane. The catalysed reaction is Mur2Ac(oyl-L-Ala-gamma-D-Glu-L-Lys-D-Ala-D-Ala)-di-trans,octa-cis-undecaprenyl diphosphate + UDP-N-acetyl-alpha-D-glucosamine = beta-D-GlcNAc-(1-&gt;4)-Mur2Ac(oyl-L-Ala-gamma-D-Glu-L-Lys-D-Ala-D-Ala)-di-trans,octa-cis-undecaprenyl diphosphate + UDP + H(+). It functions in the pathway cell wall biogenesis; peptidoglycan biosynthesis. Functionally, cell wall formation. Catalyzes the transfer of a GlcNAc subunit on undecaprenyl-pyrophosphoryl-MurNAc-pentapeptide (lipid intermediate I) to form undecaprenyl-pyrophosphoryl-MurNAc-(pentapeptide)GlcNAc (lipid intermediate II). The chain is UDP-N-acetylglucosamine--N-acetylmuramyl-(pentapeptide) pyrophosphoryl-undecaprenol N-acetylglucosamine transferase from Streptococcus pyogenes serotype M12 (strain MGAS2096).